We begin with the raw amino-acid sequence, 445 residues long: Chromosomal replication initiator protein DnaA (445 aa).

Positions 1-72 (MSGIDTIWEK…QEAFIEEIGE (72 aa)) are domain I, interacts with DnaA modulators. A domain II region spans residues 72-107 (EKLNIKVISSEDELMNNEKEAPVRKTQQTSQELLPN). The interval 108–324 (QLNTDNTFDT…GALTRVSAYS (217 aa)) is domain III, AAA+ region. Positions 152, 154, 155, and 156 each coordinate ATP. The tract at residues 325 to 445 (KLVNRELNSD…LKNIEKDITS (121 aa)) is domain IV, binds dsDNA.

The protein belongs to the DnaA family. In terms of assembly, oligomerizes as a right-handed, spiral filament on DNA at oriC.

It is found in the cytoplasm. In terms of biological role, plays an essential role in the initiation and regulation of chromosomal replication. ATP-DnaA binds to the origin of replication (oriC) to initiate formation of the DNA replication initiation complex once per cell cycle. Binds the DnaA box (a 9 base pair repeat at the origin) and separates the double-stranded (ds)DNA. Forms a right-handed helical filament on oriC DNA; dsDNA binds to the exterior of the filament while single-stranded (ss)DNA is stabiized in the filament's interior. The ATP-DnaA-oriC complex binds and stabilizes one strand of the AT-rich DNA unwinding element (DUE), permitting loading of DNA polymerase. After initiation quickly degrades to an ADP-DnaA complex that is not apt for DNA replication. Binds acidic phospholipids. This chain is Chromosomal replication initiator protein DnaA, found in Macrococcus caseolyticus (strain JCSC5402) (Macrococcoides caseolyticum).